We begin with the raw amino-acid sequence, 277 residues long: Release factor glutamine methyltransferase (277 aa).

Residues 120 to 124 (GTGSG), D143, W171, and N186 each bind S-adenosyl-L-methionine. 186 to 189 (NPPY) provides a ligand contact to substrate.

Belongs to the protein N5-glutamine methyltransferase family. PrmC subfamily.

The catalysed reaction is L-glutaminyl-[peptide chain release factor] + S-adenosyl-L-methionine = N(5)-methyl-L-glutaminyl-[peptide chain release factor] + S-adenosyl-L-homocysteine + H(+). Functionally, methylates the class 1 translation termination release factors RF1/PrfA and RF2/PrfB on the glutamine residue of the universally conserved GGQ motif. The sequence is that of Release factor glutamine methyltransferase from Coxiella burnetii (strain RSA 493 / Nine Mile phase I).